The sequence spans 2912 residues: Fibrillin-2 (2912 aa).

Residues 1 to 28 (MGRRRRLCLQLYFLWLGCVVLWAQGTAG) form the signal peptide. Residues 27-52 (AGQPQPPPPKPPRPQPPPQQVRSATA) form a disordered region. The propeptide occupies 29–77 (QPQPPPPKPPRPQPPPQQVRSATAGSEGGFLAPEYREEGAAVASRVRRR). Pro residues predominate over residues 30 to 45 (PQPPPPKPPRPQPPPQ). 3 EGF-like domains span residues 111–142 (IVPI…STCG), 145–176 (SIQQ…TYCG), and 176–208 (GQPV…PQCE). 9 cysteine pairs are disulfide-bonded: cysteine 115–cysteine 124, cysteine 119–cysteine 130, cysteine 132–cysteine 141, cysteine 149–cysteine 159, cysteine 153–cysteine 164, cysteine 166–cysteine 175, cysteine 180–cysteine 190, cysteine 184–cysteine 196, and cysteine 198–cysteine 207. An interaction with MFAP4 region spans residues 149 to 359 (CSVRCMNGGT…VTSTDGSRCI (211 aa)). The region spanning 214-266 (GPCFTQVNNQMCQGQLTGIVCTKTLCCATIGRAWGHPCEMCPAQPQPCRRGFI) is the TB 1 domain. The EGF-like 4; calcium-binding domain maps to 276–317 (DVDECQAIPGICQGGNCINTVGSFECRCPAGHKQSETTQKCE). Intrachain disulfides connect cysteine 280-cysteine 292, cysteine 287-cysteine 301, cysteine 303-cysteine 316, cysteine 322-cysteine 334, cysteine 329-cysteine 343, and cysteine 345-cysteine 358. O-linked (Glc) serine glycosylation is present at serine 298. An EGF-like 5; calcium-binding domain is found at 318 to 359 (DIDECSIIPGICETGECSNTVGSYFCVCPRGYVTSTDGSRCI). An O-linked (Glc) serine glycan is attached at serine 340. The region spanning 364 to 417 (GMCFSGLVNGRCAQELPGRMTKMQCCCEPGRCWGIGTIPEACPVRGSEEYRRLC) is the TB 2 domain. A glycan (N-linked (GlcNAc...) asparagine) is linked at asparagine 492. Residues 494–534 (TIDICKHHANLCLNGRCIPTVSSYRCECNMGYKQDANGDCI) enclose the EGF-like 6 domain. 15 disulfides stabilise this stretch: cysteine 498-cysteine 510, cysteine 505-cysteine 519, cysteine 521-cysteine 533, cysteine 539-cysteine 549, cysteine 544-cysteine 558, cysteine 560-cysteine 573, cysteine 579-cysteine 591, cysteine 586-cysteine 600, cysteine 602-cysteine 615, cysteine 621-cysteine 632, cysteine 627-cysteine 641, cysteine 643-cysteine 656, cysteine 662-cysteine 673, cysteine 668-cysteine 682, and cysteine 684-cysteine 697. A glycan (O-linked (Glc) serine) is linked at serine 516. The 40-residue stretch at 535 to 574 (DVDECTSNPCTNGDCVNTPGSYYCKCHAGFQRTPTKQACI) folds into the EGF-like 7; calcium-binding domain. An O-linked (Glc) serine glycan is attached at serine 555. Residues 575–616 (DIDECIQNGVLCKNGRCVNTDGSFQCICNAGFELTTDGKNCV) enclose the EGF-like 8; calcium-binding domain. Serine 597 is a glycosylation site (O-linked (Glc) serine). The 41-residue stretch at 617–657 (DHDECTTTNMCLNGMCINEDGSFKCICKPGFVLAPNGRYCT) folds into the EGF-like 9; calcium-binding domain. Serine 638 carries O-linked (Glc) serine glycosylation. An EGF-like 10; calcium-binding domain is found at 658–698 (DVDECQTPGICMNGHCINSEGSFRCDCPPGLAVGMDGRVCV). O-linked (Glc) serine glycosylation occurs at serine 679. In terms of domain architecture, TB 3 spans 704-756 (STCYGGIKKGVCVRPFPGAVTKSECCCANPDYGFGEPCQPCPAKNSAEFHGLC). Residues 768–809 (DINECALDPDICANGICENLRGSYRCNCNSGYEPDASGRNCI) form the EGF-like 11; calcium-binding domain. Cystine bridges form between cysteine 772/cysteine 784, cysteine 779/cysteine 793, cysteine 795/cysteine 808, cysteine 814/cysteine 826, cysteine 821/cysteine 835, cysteine 837/cysteine 850, cysteine 856/cysteine 866, cysteine 861/cysteine 875, and cysteine 877/cysteine 890. The 42-residue stretch at 810-851 (DIDECLVNRLLCDNGLCRNTPGSYSCTCPPGYVFRTETETCE) folds into the EGF-like 12; calcium-binding domain. Serine 832 is a glycosylation site (O-linked (Glc) serine). One can recognise an EGF-like 13; calcium-binding domain in the interval 852–891 (DINECESNPCVNGACRNNLGSFNCECSPGSKLSSTGLICI). An O-linked (Glc) serine glycan is attached at serine 872. Residues 896–947 (GTCWLNIQDSRCEVNINGATLKSECCATLGAAWGSPCERCELDTACPRGLAR) form the TB 4 domain. Positions 955–996 (DVNECEVFPGVCPNGRCVNSKGSFHCECPEGLTLDGTGRVCL) constitute an EGF-like 14; calcium-binding domain. Disulfide bonds link cysteine 959-cysteine 971, cysteine 966-cysteine 980, and cysteine 982-cysteine 995. Serine 977 carries O-linked (Glc) serine glycosylation. The 52-residue stretch at 1001–1052 (EQCYLKWDEDECIHPVPGKFRMDACCCAVGAAWGTECEECPKPGTKEYETLC) folds into the TB 5 domain. An EGF-like 15; calcium-binding domain is found at 1073–1114 (DINECKAFPGMCTYGKCRNTIGSFKCRCNSGFALDMEERNCT). Disulfide bonds link cysteine 1077/cysteine 1089, cysteine 1084/cysteine 1098, cysteine 1100/cysteine 1113, cysteine 1119/cysteine 1131, cysteine 1126/cysteine 1140, cysteine 1142/cysteine 1156, cysteine 1162/cysteine 1174, cysteine 1169/cysteine 1183, cysteine 1185/cysteine 1198, cysteine 1204/cysteine 1216, cysteine 1211/cysteine 1225, cysteine 1227/cysteine 1240, cysteine 1246/cysteine 1257, cysteine 1253/cysteine 1266, cysteine 1268/cysteine 1281, cysteine 1287/cysteine 1299, cysteine 1294/cysteine 1308, cysteine 1310/cysteine 1323, cysteine 1329/cysteine 1341, cysteine 1336/cysteine 1350, cysteine 1352/cysteine 1365, cysteine 1371/cysteine 1384, cysteine 1378/cysteine 1393, cysteine 1395/cysteine 1406, cysteine 1412/cysteine 1425, cysteine 1419/cysteine 1434, cysteine 1436/cysteine 1447, cysteine 1453/cysteine 1465, cysteine 1460/cysteine 1474, cysteine 1476/cysteine 1489, cysteine 1495/cysteine 1506, cysteine 1501/cysteine 1515, cysteine 1517/cysteine 1530, cysteine 1536/cysteine 1547, cysteine 1542/cysteine 1556, and cysteine 1558/cysteine 1571. Residue serine 1095 is glycosylated (O-linked (Glc) serine). Asparagine 1112 carries an N-linked (GlcNAc...) asparagine glycan. Positions 1115–1157 (DIDECRISPDLCGSGICVNTPGSFECECFEGYESGFMMMKNCM) constitute an EGF-like 16; calcium-binding domain. The EGF-like 17; calcium-binding domain occupies 1158 to 1199 (DIDECERNPLLCRGGTCVNTEGSFQCDCPLGHELSPSREDCV). Serine 1180 carries an O-linked (Glc) serine glycan. Positions 1200–1241 (DINECSLSDNLCRNGKCVNMIGTYQCSCNPGYQATPDRQGCT) constitute an EGF-like 18; calcium-binding domain. A glycan (O-linked (Glc) threonine) is linked at threonine 1222. The EGF-like 19; calcium-binding domain maps to 1242–1282 (DIDECMIMNGGCDTQCTNSEGSYECSCSEGYALMPDGRSCA). A glycan (O-linked (Glc) serine) is linked at serine 1263. Positions 1283–1324 (DIDECENNPDICDGGQCTNIPGEYRCLCYDGFMASMDMKTCI) constitute an EGF-like 20; calcium-binding domain. An EGF-like 21; calcium-binding domain is found at 1325–1366 (DVNECDLNSNICMFGECENTKGSFICHCQLGYSVKKGTTGCT). Residue serine 1347 is glycosylated (O-linked (Glc) serine). Residues 1367–1407 (DVDECEIGAHNCDMHASCLNIPGSFKCSCREGWIGNGIKCI) enclose the EGF-like 22; calcium-binding domain. The O-linked (Glc) serine glycan is linked to serine 1390. The region spanning 1408-1448 (DLDECSNGTHQCSINAQCVNTPGSYRCACSEGFTGDGFTCS) is the EGF-like 23; calcium-binding domain. Asparagine 1414 carries N-linked (GlcNAc...) asparagine glycosylation. Positions 1449 to 1490 (DVDECAENINLCENGQCLNVPGAYRCECEMGFTPASDSRSCQ) constitute an EGF-like 24; calcium-binding domain. Positions 1491–1531 (DIDECSFQNICVFGTCNNLPGMFHCICDDGYELDRTGGNCT) constitute an EGF-like 25; calcium-binding domain. N-linked (GlcNAc...) asparagine glycosylation is present at asparagine 1529. The 41-residue stretch at 1532-1572 (DIDECADPINCVNGLCVNTPGRYECNCPPDFQLNPTGVGCV) folds into the EGF-like 26; calcium-binding domain. The TB 6 domain occupies 1577–1633 (GNCYLKFGPRGDGSLSCNTEIGVGVSRSSCCCSLGKAWGNPCETCPPVNSTEYYTLC). N-linked (GlcNAc...) asparagine glycosylation occurs at asparagine 1625. Residues 1650 to 1691 (DIDECQELPGLCQGGNCINTFGSFQCECPQGYYLSEDTRICE) enclose the EGF-like 27; calcium-binding domain. 6 cysteine pairs are disulfide-bonded: cysteine 1654–cysteine 1666, cysteine 1661–cysteine 1675, cysteine 1677–cysteine 1690, cysteine 1696–cysteine 1708, cysteine 1703–cysteine 1717, and cysteine 1719–cysteine 1732. A glycan (O-linked (Glc) serine) is linked at serine 1672. One can recognise an EGF-like 28; calcium-binding domain in the interval 1692–1733 (DIDECFAHPGVCGPGTCYNTLGNYTCICPPEYMQVNGGHNCM). Asparagine 1714 carries an N-linked (GlcNAc...) asparagine glycan. An interaction with MFAP4 region spans residues 1735–2171 (MRKSFCYRSY…VPSLHDTRED (437 aa)). Residues 1738–1791 (SFCYRSYNGTTCENELPFNVTKRMCCCTYNVGKAWNKPCEPCPTPGTADFKTIC) enclose the TB 7 domain. 2 N-linked (GlcNAc...) asparagine glycosylation sites follow: asparagine 1745 and asparagine 1756. Residues 1808–1849 (DIDECKEIPGICANGVCINQIGSFRCECPTGFSYNDLLLVCE) form the EGF-like 29; calcium-binding domain. 21 disulfides stabilise this stretch: cysteine 1812–cysteine 1824, cysteine 1819–cysteine 1833, cysteine 1835–cysteine 1848, cysteine 1854–cysteine 1867, cysteine 1861–cysteine 1876, cysteine 1878–cysteine 1890, cysteine 1896–cysteine 1908, cysteine 1903–cysteine 1917, cysteine 1919–cysteine 1932, cysteine 1938–cysteine 1948, cysteine 1943–cysteine 1957, cysteine 1959–cysteine 1971, cysteine 1977–cysteine 1990, cysteine 1985–cysteine 1999, cysteine 2001–cysteine 2014, cysteine 2020–cysteine 2032, cysteine 2027–cysteine 2041, cysteine 2043–cysteine 2054, cysteine 2060–cysteine 2072, cysteine 2067–cysteine 2081, and cysteine 2083–cysteine 2096. The EGF-like 30; calcium-binding domain occupies 1850–1891 (DIDECSNGDNLCQRNADCINSPGSYRCECAAGFKLSPNGACV). Serine 1873 is a glycosylation site (O-linked (Glc) serine). Residues 1892–1933 (DRNECLEIPNVCSHGLCVDLQGSYQCICHNGFKASQDQTMCM) form the EGF-like 31; calcium-binding domain. The EGF-like 32; calcium-binding domain maps to 1934–1972 (DVDECERHPCGNGTCKNTVGSYNCLCYPGFELTHNNDCL). N-linked (GlcNAc...) asparagine glycosylation is present at asparagine 1945. Serine 1954 is a glycosylation site (O-linked (Glc) serine). An EGF-like 33; calcium-binding domain is found at 1973–2015 (DIDECSSFFGQVCRNGRCFNEIGSFKCLCNEGYELTPDGKNCI). Residue serine 1996 is glycosylated (O-linked (Glc) serine). Residues 2016-2055 (DTNECVALPGSCSPGTCQNLEGSFRCICPPGYEVKSENCI) enclose the EGF-like 34; calcium-binding domain. Positions 2056–2097 (DINECDEDPNICLFGSCTNTPGGFQCLCPPGFVLSDNGRRCF) constitute an EGF-like 35; calcium-binding domain. A TB 8 domain is found at 2102 to 2155 (SFCFTNFENGKCSVPKAFNTTKAKCCCSKMPGEGWGDPCELCPKDDEVAFQDLC). The N-linked (GlcNAc...) asparagine glycan is linked to asparagine 2120. The EGF-like 36; calcium-binding domain maps to 2171 to 2212 (DVNECLESPGICSNGQCINTDGSFRCECPMGYNLDYTGVRCV). Intrachain disulfides connect cysteine 2175/cysteine 2187, cysteine 2182/cysteine 2196, cysteine 2198/cysteine 2211, cysteine 2217/cysteine 2228, cysteine 2223/cysteine 2237, cysteine 2239/cysteine 2251, cysteine 2257/cysteine 2268, cysteine 2264/cysteine 2277, cysteine 2279/cysteine 2292, cysteine 2298/cysteine 2312, cysteine 2305/cysteine 2321, cysteine 2323/cysteine 2336, cysteine 2342/cysteine 2354, cysteine 2349/cysteine 2363, and cysteine 2365/cysteine 2378. O-linked (Glc) serine glycosylation is present at serine 2193. Residues 2213–2252 (DTDECSIGNPCGNGTCTNVIGSFECNCNEGFEPGPMMNCE) form the EGF-like 37; calcium-binding domain. An N-linked (GlcNAc...) asparagine glycan is attached at asparagine 2225. An EGF-like 38; calcium-binding domain is found at 2253-2293 (DINECAQNPLLCAFRCMNTFGSYECTCPIGYALREDQKMCK). An O-linked (Glc) serine glycan is attached at serine 2274. Residues 2294–2337 (DLDECAEGLHDCESRGMMCKNLIGTFMCICPPGMARRPDGEGCV) enclose the EGF-like 39; calcium-binding domain. Residues 2338–2379 (DENECRTKPGICENGRCVNIIGSYRCECNEGFQSSSSGTECL) form the EGF-like 40; calcium-binding domain. A glycan (O-linked (Glc) serine) is linked at serine 2360. Positions 2384–2437 (GLCFAEVLQTICQMASSSRNLVTKSECCCDGGRGWGHQCELCPLPGTAQYKKIC) constitute a TB 9 domain. The EGF-like 41; calcium-binding domain occupies 2449–2490 (DIDECKVMPNLCTNGQCINTMGSFRCFCKVGYTTDISGTSCI). 21 disulfide bridges follow: cysteine 2453/cysteine 2465, cysteine 2460/cysteine 2474, cysteine 2476/cysteine 2489, cysteine 2495/cysteine 2506, cysteine 2502/cysteine 2515, cysteine 2517/cysteine 2530, cysteine 2536/cysteine 2547, cysteine 2543/cysteine 2556, cysteine 2558/cysteine 2569, cysteine 2575/cysteine 2588, cysteine 2582/cysteine 2597, cysteine 2599/cysteine 2612, cysteine 2618/cysteine 2628, cysteine 2624/cysteine 2637, cysteine 2639/cysteine 2652, cysteine 2658/cysteine 2669, cysteine 2664/cysteine 2678, cysteine 2680/cysteine 2693, cysteine 2699/cysteine 2710, cysteine 2706/cysteine 2719, and cysteine 2721/cysteine 2733. Serine 2471 carries an O-linked (Glc) serine glycan. The EGF-like 42; calcium-binding domain maps to 2491–2531 (DLDECSQSPKPCNYICKNTEGSYQCSCPRGYVLQEDGKTCK). An O-linked (Glc) serine glycan is attached at serine 2512. Positions 2532–2570 (DLDECQTKQHNCQFLCVNTLGGFTCKCPPGFTQHHTACI) constitute an EGF-like 43; calcium-binding domain. The region spanning 2571-2613 (DNNECGSQPSLCGAKGICQNTPGSFSCECQRGFSLDATGLNCE) is the EGF-like 44; calcium-binding domain. Residue serine 2594 is glycosylated (O-linked (Glc) serine). Positions 2614-2653 (DVDECDGNHRCQHGCQNILGGYRCGCPQGYIQHYQWNQCV) constitute an EGF-like 45; calcium-binding domain. The region spanning 2654–2694 (DENECSNPNACGSASCYNTLGSYKCACPSGFSFDQFSSACH) is the EGF-like 46; calcium-binding domain. Serine 2675 carries O-linked (Glc) serine glycosylation. The region spanning 2695–2734 (DVNECSSSKNPCNYGCSNTEGGYLCGCPPGYYRVGQGHCV) is the EGF-like 47; calcium-binding domain. An N-linked (GlcNAc...) asparagine glycan is attached at asparagine 2808.

Belongs to the fibrillin family. In terms of assembly, interacts with BMP2, BMP4, BMP7, BMP10 and GDF5. Interacts with MFAP2 and MFAP5. Interacts with ADAMTSL5. Interacts with MFAP4. N-glycosylated. Post-translationally, O-glycosylated on serine residues by POGLUT2 and POGLUT3. In terms of tissue distribution, almost exclusively expressed in placenta. Expressed at much lower level in other tissues. Expressed in fetal eye (18 weeks)in the retinal pigment epithelium (RPE), the choroid, Bruch's membrane and in the sclera. Not expressed in the neural retina. Present at high level in cytotrophoblasts as compared with syncytiotrophoblasts at 8-9 weeks of pregnancy (at protein level). Levels in the serum increase during pregnancy (at protein level).

It is found in the secreted. Its subcellular location is the extracellular space. It localises to the extracellular matrix. In terms of biological role, fibrillins are structural components of 10-12 nm extracellular calcium-binding microfibrils, which occur either in association with elastin or in elastin-free bundles. Fibrillin-2-containing microfibrils regulate the early process of elastic fiber assembly. Regulates osteoblast maturation by controlling TGF-beta bioavailability and calibrating TGF-beta and BMP levels, respectively. Its function is as follows. Hormone secreted by trophoblasts that promotes trophoblast invasiveness. Has glucogenic activity: is able to increase plasma glucose levels. The sequence is that of Fibrillin-2 from Homo sapiens (Human).